We begin with the raw amino-acid sequence, 418 residues long: Gamma-glutamyl phosphate reductase (418 aa).

It belongs to the gamma-glutamyl phosphate reductase family.

Its subcellular location is the cytoplasm. It carries out the reaction L-glutamate 5-semialdehyde + phosphate + NADP(+) = L-glutamyl 5-phosphate + NADPH + H(+). The protein operates within amino-acid biosynthesis; L-proline biosynthesis; L-glutamate 5-semialdehyde from L-glutamate: step 2/2. In terms of biological role, catalyzes the NADPH-dependent reduction of L-glutamate 5-phosphate into L-glutamate 5-semialdehyde and phosphate. The product spontaneously undergoes cyclization to form 1-pyrroline-5-carboxylate. The protein is Gamma-glutamyl phosphate reductase of Nitrosococcus oceani (strain ATCC 19707 / BCRC 17464 / JCM 30415 / NCIMB 11848 / C-107).